Consider the following 309-residue polypeptide: UPF0282 protein Saci_0277 (309 aa).

It belongs to the UPF0282 family.

The protein is UPF0282 protein Saci_0277 of Sulfolobus acidocaldarius (strain ATCC 33909 / DSM 639 / JCM 8929 / NBRC 15157 / NCIMB 11770).